Here is a 108-residue protein sequence, read N- to C-terminus: Large ribosomal subunit protein uL24 (108 aa).

Belongs to the universal ribosomal protein uL24 family. As to quaternary structure, part of the 50S ribosomal subunit.

Its function is as follows. One of two assembly initiator proteins, it binds directly to the 5'-end of the 23S rRNA, where it nucleates assembly of the 50S subunit. One of the proteins that surrounds the polypeptide exit tunnel on the outside of the subunit. This is Large ribosomal subunit protein uL24 from Geotalea daltonii (strain DSM 22248 / JCM 15807 / FRC-32) (Geobacter daltonii).